The primary structure comprises 352 residues: Phosphate acyltransferase (352 aa).

Residues 328 to 339 (ESFPGDAREREG) are compositionally biased toward basic and acidic residues. The interval 328-352 (ESFPGDAREREGAPAPDAGTERVAS) is disordered.

Belongs to the PlsX family. In terms of assembly, homodimer. Probably interacts with PlsY.

The protein resides in the cytoplasm. The enzyme catalyses a fatty acyl-[ACP] + phosphate = an acyl phosphate + holo-[ACP]. Its pathway is lipid metabolism; phospholipid metabolism. Catalyzes the reversible formation of acyl-phosphate (acyl-PO(4)) from acyl-[acyl-carrier-protein] (acyl-ACP). This enzyme utilizes acyl-ACP as fatty acyl donor, but not acyl-CoA. This is Phosphate acyltransferase from Citrifermentans bemidjiense (strain ATCC BAA-1014 / DSM 16622 / JCM 12645 / Bem) (Geobacter bemidjiensis).